We begin with the raw amino-acid sequence, 354 residues long: Uroporphyrinogen decarboxylase (354 aa).

Substrate-binding positions include Arg-27–Arg-31, Phe-46, Asp-77, Tyr-154, Thr-209, and His-327.

Belongs to the uroporphyrinogen decarboxylase family. Homodimer.

The protein resides in the cytoplasm. It catalyses the reaction uroporphyrinogen III + 4 H(+) = coproporphyrinogen III + 4 CO2. It participates in porphyrin-containing compound metabolism; protoporphyrin-IX biosynthesis; coproporphyrinogen-III from 5-aminolevulinate: step 4/4. Functionally, catalyzes the decarboxylation of four acetate groups of uroporphyrinogen-III to yield coproporphyrinogen-III. This is Uroporphyrinogen decarboxylase from Salmonella typhi.